Reading from the N-terminus, the 593-residue chain is La-related protein 7 (593 aa).

Polar residues predominate over residues M1–N11. Residues M1–K28 are disordered. Over residues K12–D24 the composition is skewed to basic and acidic residues. The 92-residue stretch at R30 to P121 folds into the HTH La-type RNA-binding domain. An RRM domain is found at R127 to T205. The disordered stretch occupies residues P191 to D363. Residues K231–A240 are compositionally biased toward basic residues. Acidic residues predominate over residues A248 to I259. Composition is skewed to basic and acidic residues over residues E295 to R307, S314 to P340, and Q348 to D363. In terms of domain architecture, xRRM spans Q461–K574.

The protein belongs to the LARP7 family. In terms of assembly, core component of the 7SK RNP complex. Associates with box C/D small nucleolar ribonucleoprotein (snoRNP) complexes.

Its subcellular location is the nucleus. It localises to the nucleoplasm. Functionally, RNA-binding protein that specifically binds distinct small nuclear RNA (snRNAs) and regulates their processing and function. Specifically binds the 7SK snRNA (7SK RNA) and acts as a core component of the 7SK ribonucleoprotein (RNP) complex, thereby acting as a negative regulator of transcription elongation by RNA polymerase II. The 7SK RNP complex sequesters the positive transcription elongation factor b (P-TEFb) in a large inactive 7SK RNP complex preventing RNA polymerase II phosphorylation and subsequent transcriptional elongation. The 7SK RNP complex also promotes snRNA gene transcription by RNA polymerase II via interaction with the little elongation complex (LEC). LARP7 specifically binds to the highly conserved 3'-terminal U-rich stretch of 7SK RNA; on stimulation, remains associated with 7SK RNA, whereas P-TEFb is released from the complex. LARP7 also acts as a regulator of mRNA splicing fidelity by promoting U6 snRNA processing. Specifically binds U6 snRNAs and associates with a subset of box C/D RNP complexes: promotes U6 snRNA 2'-O-methylation by facilitating U6 snRNA loading into box C/D RNP complexes. U6 snRNA 2'-O-methylation is required for mRNA splicing fidelity. In Xenopus tropicalis (Western clawed frog), this protein is La-related protein 7.